Consider the following 432-residue polypeptide: Mitochondrial distribution and morphology protein 12 (432 aa).

In terms of domain architecture, SMP-LTD spans 1–432 (MSIEVDWRAA…VFPSFWTFLI (432 aa)). Disordered regions lie at residues 182-273 (WTDP…PRMR) and 354-377 (QQEA…PKRQ). A compositionally biased stretch (low complexity) spans 214 to 234 (TSNPTSRPSTSSTLPSHPSAS). Composition is skewed to basic and acidic residues over residues 243-253 (TGKEHGSLAED) and 355-364 (QEARGQDDRP).

The protein belongs to the MDM12 family. Component of the ER-mitochondria encounter structure (ERMES) or MDM complex, composed of mmm1, mdm10, mdm12 and mdm34. A mmm1 homodimer associates with one molecule of mdm12 on each side in a pairwise head-to-tail manner, and the SMP-LTD domains of mmm1 and mdm12 generate a continuous hydrophobic tunnel for phospholipid trafficking.

It localises to the mitochondrion outer membrane. Its subcellular location is the endoplasmic reticulum membrane. Its function is as follows. Component of the ERMES/MDM complex, which serves as a molecular tether to connect the endoplasmic reticulum (ER) and mitochondria. Components of this complex are involved in the control of mitochondrial shape and protein biogenesis, and function in nonvesicular lipid trafficking between the ER and mitochondria. Mdm12 is required for the interaction of the ER-resident membrane protein MMM1 and the outer mitochondrial membrane-resident beta-barrel protein mdm10. The mdm12-mmm1 subcomplex functions in the major beta-barrel assembly pathway that is responsible for biogenesis of all mitochondrial outer membrane beta-barrel proteins, and acts in a late step after the SAM complex. The mdm10-mdm12-mmm1 subcomplex further acts in the TOM40-specific pathway after the action of the mdm12-mmm1 complex. Essential for establishing and maintaining the structure of mitochondria and maintenance of mtDNA nucleoids. This chain is Mitochondrial distribution and morphology protein 12, found in Aspergillus flavus (strain ATCC 200026 / FGSC A1120 / IAM 13836 / NRRL 3357 / JCM 12722 / SRRC 167).